The following is a 128-amino-acid chain: Small ribosomal subunit protein uS9c (128 aa).

This sequence belongs to the universal ribosomal protein uS9 family.

It is found in the plastid. The sequence is that of Small ribosomal subunit protein uS9c (rps9) from Euglena longa (Euglenophycean alga).